The primary structure comprises 354 residues: Neutral protease 2 homolog AN7962 (354 aa).

The signal sequence occupies residues 1–19; that stretch reads MKFIAPIALLGMFQAASAS. A propeptide spanning residues 20–178 is cleaved from the precursor; the sequence is PVDIKTSNAG…GAQLSKLSKR (159 aa). 2 disulfides stabilise this stretch: C184–C255 and C262–C280. H305 is a Zn(2+) binding site. Residue E306 is part of the active site. Residues H309 and D320 each contribute to the Zn(2+) site.

This sequence belongs to the peptidase M35 family. Requires Zn(2+) as cofactor.

Its subcellular location is the secreted. The enzyme catalyses Preferential cleavage of bonds with hydrophobic residues in P1'. Also 3-Asn-|-Gln-4 and 8-Gly-|-Ser-9 bonds in insulin B chain.. Secreted metalloproteinase that allows assimilation of proteinaceous substrates. Shows high activities on basic nuclear substrates such as histone and protamine. This is Neutral protease 2 homolog AN7962 from Emericella nidulans (strain FGSC A4 / ATCC 38163 / CBS 112.46 / NRRL 194 / M139) (Aspergillus nidulans).